The chain runs to 435 residues: Actin-like protein 7A (435 aa).

Disordered regions lie at residues 1–20 (MWAP…VGNQ) and 29–65 (QTAS…ERPK). Residues 31–51 (ASLRDGPAKRAVWVRRRSSEP) form a required for interaction with TES region. Over residues 47 to 65 (RSSEPQEPTESKAAKERPK) the composition is skewed to basic and acidic residues.

The protein belongs to the actin family. Interacts (via N-terminus) with TES (via LIM domain 2). Heterodimer with TES; the heterodimer interacts with ENAH to form a heterotrimer. Interacts with ACTL9. Interacts with CYLC1; the interaction may be relevant for proper acrosome attachment to the nuclear envelope.

The protein resides in the cytoplasm. It is found in the cytoskeleton. The protein localises to the golgi apparatus. It localises to the nucleus. Its function is as follows. Essential for normal spermatogenesis and male fertility. Required for normal sperm head morphology, acroplaxome formation, acrosome attachment, and acrosome granule stability. May anchor and stabilize acrosomal adherence to the acroplaxome at least in part by facilitating the presence of F-actin in the subacrosomal space. May play an important role in formation and fusion of Golgi-derived vesicles during acrosome biogenesis. In Macaca fascicularis (Crab-eating macaque), this protein is Actin-like protein 7A (ACTL7A).